The sequence spans 94 residues: MGKGGNYVTVAASEVDELRRKNGEMEKAVEEMKKEMLQLWRRTQVAEEAEERLCSQLAELEAESLDQARDYHSRIIFLMNELSRLSSDSASASP.

Residues 15-63 (VDELRRKNGEMEKAVEEMKKEMLQLWRRTQVAEEAEERLCSQLAELEAE) are a coiled coil.

Functionally, may be involved in defense responses monitoring. Probably implicated into osmotic stress signaling. This Arabidopsis thaliana (Mouse-ear cress) protein is Protein RESPONSE TO LOW SULFUR 2.